Consider the following 567-residue polypeptide: uncharacterized protein (567 aa).

Residues 1 to 26 form a disordered region; the sequence is MPSEKATTRHLPGAVETLSPRTGRRP. 6 consecutive transmembrane segments (helical) span residues 57-77, 90-110, 142-162, 173-193, 221-241, and 257-277; these read AILVTNVIGLIVGAMLLTVAF, VSFGIVPGYCVLAFILGTYWL, VALAVLFLWGAAAALWTIIYG, LFSMGVIGVVAATSCYLLTEF, MLVWLLCSGVPNVGVALTAIF, and VLILWAPLLIFGFILMWILAW. The HAMP domain maps to 277 to 329; that stretch reads WLTATPVRVVREALNRVEQGDLSGDLVVFDGTELGELQRGFNRMVEGLRERER. In terms of domain architecture, Guanylate cyclase spans 361-485; it reads AVVFVDIVGS…EPVNEAARLC (125 aa).

The protein belongs to the adenylyl cyclase class-3 family.

The protein resides in the cell membrane. This is an uncharacterized protein from Mycobacterium bovis (strain ATCC BAA-935 / AF2122/97).